Here is an 87-residue protein sequence, read N- to C-terminus: Small ribosomal subunit protein bS20 (87 aa).

Positions 1-29 (MANTAQARKRARQAVKQNAHNSSQRSTLR) are disordered. Polar residues predominate over residues 20 to 29 (HNSSQRSTLR).

It belongs to the bacterial ribosomal protein bS20 family.

Its function is as follows. Binds directly to 16S ribosomal RNA. The protein is Small ribosomal subunit protein bS20 of Herminiimonas arsenicoxydans.